The following is a 95-amino-acid chain: MLKPLGDRVLVEIIEEAEQKTAGGLYVPDSAKEKSQRGKVVAVGTGKTLDNGTKVAMEVKEGDTVYFAKYGGTEVSLEGKNYSLLSERDLLAIVE.

The protein belongs to the GroES chaperonin family. Heptamer of 7 subunits arranged in a ring. Interacts with the chaperonin GroEL.

The protein resides in the cytoplasm. In terms of biological role, together with the chaperonin GroEL, plays an essential role in assisting protein folding. The GroEL-GroES system forms a nano-cage that allows encapsulation of the non-native substrate proteins and provides a physical environment optimized to promote and accelerate protein folding. GroES binds to the apical surface of the GroEL ring, thereby capping the opening of the GroEL channel. This is Co-chaperonin GroES from Deinococcus radiodurans (strain ATCC 13939 / DSM 20539 / JCM 16871 / CCUG 27074 / LMG 4051 / NBRC 15346 / NCIMB 9279 / VKM B-1422 / R1).